A 65-amino-acid polypeptide reads, in one-letter code: Large ribosomal subunit protein bL35 (65 aa).

Basic residues-rich tracts occupy residues 1 to 16 (MPKM…RFKK) and 31 to 45 (HRFH…RQLR). The segment at 1-47 (MPKMKTHRASAKRFKKTANGGLKSASAYTSHRFHGKTKKQRRQLRGT) is disordered.

Belongs to the bacterial ribosomal protein bL35 family.

The polypeptide is Large ribosomal subunit protein bL35 (Leuconostoc citreum (strain KM20)).